We begin with the raw amino-acid sequence, 138 residues long: Basic phospholipase A2 homolog TM-N49 (138 aa).

Positions 1-16 (MRTLWIMAVLLLGVEG) are cleaved as a signal peptide. Disulfide bonds link C42-C131, C44-C60, C59-C111, C65-C138, C66-C104, C73-C97, and C91-C102.

The protein belongs to the phospholipase A2 family. Group II subfamily. N49 sub-subfamily. Homodimer; non-covalently linked. Expressed by the venom gland.

The protein resides in the secreted. Snake venom phospholipase A2 (PLA2) that exhibits potent myotoxic activity causing inflammatory cell infiltration, severe myoedema, myonecrosis and myolysis in the gastrocnemius muscles of BALB/c mice. This chain is Basic phospholipase A2 homolog TM-N49, found in Protobothrops mucrosquamatus (Taiwan habu).